A 746-amino-acid polypeptide reads, in one-letter code: Steroid receptor seven-up, isoform A (746 aa).

The interval 38–191 is disordered; that stretch reads PPHSAWHEPP…HSQSSNSGSQ (154 aa). Residues 56 to 68 are compositionally biased toward low complexity; it reads AASAGPGTTTGSV. Over residues 83–101 the composition is skewed to polar residues; sequence QQSAVIKQDLSCPSLNQAG. Gly residues predominate over residues 122 to 141; sequence GSAGGHHSGSGSGSGSGVNP. Polar residues predominate over residues 158-170; it reads MLTSIKGQPTGCG. Low complexity predominate over residues 171–191; it reads STTPSSQANSSHSQSSNSGSQ. The nuclear receptor DNA-binding region spans 197–272; it reads NIECVVCGDK…MGMRREAVQR (76 aa). NR C4-type zinc fingers lie at residues 200 to 220 and 236 to 260; these read CVVC…CEGC and CRGS…LKKC. Residues 307–556 form the NR LBD domain; it reads YLSSYISLLL…PLVPSAGSAF (250 aa). Residues 579–645 form a disordered region; that stretch reads QATPPSSGGG…APAPVPTSSV (67 aa). Positions 592–605 are enriched in polar residues; the sequence is GHNNSSGLGASLPT. The span at 606–645 shows a compositional bias: low complexity; sequence QSQSGSSSRNLTASPLSTSLATAPAPASASAPAPVPTSSV.

Belongs to the nuclear hormone receptor family. NR2 subfamily. As to expression, expressed in several embryonic tissues; dorsal vessel, oenocyte and fat body. CNS expression is dynamic and confined to temporally restricted subsections of the NB lineage; expressed in many NB and GMCs, but only a small number of neurons.

The protein localises to the nucleus. In terms of biological role, receptor that is required in photoreceptors R1, R3, R4 and R6 during eye development; generation of the ganglion mother cell-2 (GMC-2) fate in the nb7-3 lineage, coinciding with the transition in the expression of HB to KR in the neuroblasts (NBs). The polypeptide is Steroid receptor seven-up, isoform A (svp) (Drosophila melanogaster (Fruit fly)).